We begin with the raw amino-acid sequence, 398 residues long: Succinate--CoA ligase [ADP-forming] subunit beta (398 aa).

One can recognise an ATP-grasp domain in the interval 9–254 (KALLHEFGVP…ETEEDAKEIE (246 aa)). Residues Lys46, 53-55 (GRG), Glu109, Ser112, and Glu117 each bind ATP. Residues Asn209 and Asp223 each contribute to the Mg(2+) site. Residues Asn274 and 331–333 (GIM) each bind substrate.

The protein belongs to the succinate/malate CoA ligase beta subunit family. Heterotetramer of two alpha and two beta subunits. Mg(2+) is required as a cofactor.

It carries out the reaction succinate + ATP + CoA = succinyl-CoA + ADP + phosphate. The enzyme catalyses GTP + succinate + CoA = succinyl-CoA + GDP + phosphate. It participates in carbohydrate metabolism; tricarboxylic acid cycle; succinate from succinyl-CoA (ligase route): step 1/1. Its function is as follows. Succinyl-CoA synthetase functions in the citric acid cycle (TCA), coupling the hydrolysis of succinyl-CoA to the synthesis of either ATP or GTP and thus represents the only step of substrate-level phosphorylation in the TCA. The beta subunit provides nucleotide specificity of the enzyme and binds the substrate succinate, while the binding sites for coenzyme A and phosphate are found in the alpha subunit. The protein is Succinate--CoA ligase [ADP-forming] subunit beta of Bradyrhizobium sp. (strain BTAi1 / ATCC BAA-1182).